The primary structure comprises 321 residues: Putative ribose-phosphate pyrophosphokinase 2 (321 aa).

Residues 41-43 and 100-101 each bind ATP; these read DGE and RQ. Histidine 134 serves as a coordination point for Mg(2+). D-ribose 5-phosphate is bound by residues aspartate 223 and 227-231; that span reads NTGVT.

Belongs to the ribose-phosphate pyrophosphokinase family. Class I subfamily. As to quaternary structure, homohexamer. Mg(2+) serves as cofactor.

Its subcellular location is the cytoplasm. The enzyme catalyses D-ribose 5-phosphate + ATP = 5-phospho-alpha-D-ribose 1-diphosphate + AMP + H(+). It participates in metabolic intermediate biosynthesis; 5-phospho-alpha-D-ribose 1-diphosphate biosynthesis; 5-phospho-alpha-D-ribose 1-diphosphate from D-ribose 5-phosphate (route I): step 1/1. Its function is as follows. Involved in the biosynthesis of the central metabolite phospho-alpha-D-ribosyl-1-pyrophosphate (PRPP) via the transfer of pyrophosphoryl group from ATP to 1-hydroxyl of ribose-5-phosphate (Rib-5-P). The sequence is that of Putative ribose-phosphate pyrophosphokinase 2 from Lactococcus lactis subsp. lactis (strain IL1403) (Streptococcus lactis).